The sequence spans 158 residues: Putative 4-hydroxy-4-methyl-2-oxoglutarate aldolase (158 aa).

Residues 75–78 (GDLI) and R97 each bind substrate. Residue D98 participates in a divalent metal cation binding.

Belongs to the class II aldolase/RraA-like family. Homotrimer. A divalent metal cation serves as cofactor.

It carries out the reaction 4-hydroxy-4-methyl-2-oxoglutarate = 2 pyruvate. The catalysed reaction is oxaloacetate + H(+) = pyruvate + CO2. Its function is as follows. Catalyzes the aldol cleavage of 4-hydroxy-4-methyl-2-oxoglutarate (HMG) into 2 molecules of pyruvate. Also contains a secondary oxaloacetate (OAA) decarboxylase activity due to the common pyruvate enolate transition state formed following C-C bond cleavage in the retro-aldol and decarboxylation reactions. The polypeptide is Putative 4-hydroxy-4-methyl-2-oxoglutarate aldolase (Saccharopolyspora erythraea (strain ATCC 11635 / DSM 40517 / JCM 4748 / NBRC 13426 / NCIMB 8594 / NRRL 2338)).